The primary structure comprises 316 residues: Haloacid dehalogenase-like hydrolase domain-containing protein At4g39970 (316 aa).

The transit peptide at 1–46 (MAVSCNHSAILFSPSSTAGSSSVTSSSSLIGFPRFQTLRFKSRSVY) directs the protein to the chloroplast. The Nucleophile role is filled by Asp-69. Residues Asp-69, Asp-71, and Asp-259 each coordinate Mg(2+). Asp-71 (proton donor) is an active-site residue.

Belongs to the HAD-like hydrolase superfamily. DOG/GPP family. Requires Mg(2+) as cofactor.

The protein localises to the plastid. Its subcellular location is the chloroplast. This Arabidopsis thaliana (Mouse-ear cress) protein is Haloacid dehalogenase-like hydrolase domain-containing protein At4g39970.